The primary structure comprises 302 residues: Methionyl-tRNA formyltransferase (302 aa).

Residue 103 to 106 (SLLP) coordinates (6S)-5,6,7,8-tetrahydrofolate.

This sequence belongs to the Fmt family.

It catalyses the reaction L-methionyl-tRNA(fMet) + (6R)-10-formyltetrahydrofolate = N-formyl-L-methionyl-tRNA(fMet) + (6S)-5,6,7,8-tetrahydrofolate + H(+). Attaches a formyl group to the free amino group of methionyl-tRNA(fMet). The formyl group appears to play a dual role in the initiator identity of N-formylmethionyl-tRNA by promoting its recognition by IF2 and preventing the misappropriation of this tRNA by the elongation apparatus. The protein is Methionyl-tRNA formyltransferase of Pseudothermotoga lettingae (strain ATCC BAA-301 / DSM 14385 / NBRC 107922 / TMO) (Thermotoga lettingae).